The sequence spans 357 residues: Metacaspase-3 (357 aa).

Residue His168 is part of the active site. Residues Asp183, Asp199, and Asp200 each coordinate Ca(2+). Residue Cys223 is part of the active site. Residue Asp230 participates in Ca(2+) binding.

Belongs to the peptidase C14B family.

The protein localises to the recycling endosome. Activated by Ca(2+). In terms of biological role, cysteine protease that cleaves specifically after arginine or lysine residues. In the bloodstream form, may cleave inactive metacaspase-4 MCA4 prior to MCA4 secretion. The sequence is that of Metacaspase-3 from Trypanosoma brucei brucei.